We begin with the raw amino-acid sequence, 459 residues long: 4,4'-diaponeurosporen-aldehyde dehydrogenase (459 aa).

Residues 114–115 (FN) and 188–189 (GS) contribute to the NAD(+) site. The Proton acceptor role is filled by glutamate 210. Methionine 211 contributes to the NAD(+) binding site. Cysteine 244 (nucleophile) is an active-site residue. Glutamate 336 is a binding site for NAD(+).

Belongs to the aldehyde dehydrogenase family.

The enzyme catalyses 4,4'-diaponeurosporenal + NAD(+) + H2O = 4,4'-diaponeurosporenoate + NADH + 2 H(+). Its pathway is carotenoid biosynthesis; staphyloxanthin biosynthesis; staphyloxanthin from farnesyl diphosphate. Involved in the biosynthesis of the yellow-orange carotenoid staphyloxanthin, which plays a role in the virulence via its protective function against oxidative stress. Catalyzes the oxidation of 4,4'-diaponeurosporen-4-al to yield 4,4'-diaponeurosporenoic acid. The chain is 4,4'-diaponeurosporen-aldehyde dehydrogenase from Staphylococcus aureus (strain NCTC 8325 / PS 47).